The sequence spans 311 residues: Dihydroorotate dehydrogenase B (NAD(+)), catalytic subunit (311 aa).

Substrate contacts are provided by residues Lys-52, 76–80 (NAMGL), and Asn-133. 52–53 (KS) serves as a coordination point for FMN. Asn-133 provides a ligand contact to FMN. The active-site Nucleophile is Cys-136. FMN-binding residues include Lys-171 and Ile-197. 198 to 199 (NT) contacts substrate. FMN is bound by residues Gly-223, 249 to 250 (GG), and 271 to 272 (GS).

The protein belongs to the dihydroorotate dehydrogenase family. Type 1 subfamily. As to quaternary structure, heterotetramer of 2 PyrK and 2 PyrD type B subunits. Requires FMN as cofactor.

The protein resides in the cytoplasm. It catalyses the reaction (S)-dihydroorotate + NAD(+) = orotate + NADH + H(+). Its pathway is pyrimidine metabolism; UMP biosynthesis via de novo pathway; orotate from (S)-dihydroorotate (NAD(+) route): step 1/1. Catalyzes the conversion of dihydroorotate to orotate with NAD(+) as electron acceptor. This chain is Dihydroorotate dehydrogenase B (NAD(+)), catalytic subunit (pyrD), found in Methanosarcina acetivorans (strain ATCC 35395 / DSM 2834 / JCM 12185 / C2A).